The chain runs to 254 residues: tRNA (guanine-N(1)-)-methyltransferase (254 aa).

Residues Gly114 and 134–139 (IGDYVL) contribute to the S-adenosyl-L-methionine site.

Belongs to the RNA methyltransferase TrmD family. As to quaternary structure, homodimer.

Its subcellular location is the cytoplasm. It catalyses the reaction guanosine(37) in tRNA + S-adenosyl-L-methionine = N(1)-methylguanosine(37) in tRNA + S-adenosyl-L-homocysteine + H(+). Its function is as follows. Specifically methylates guanosine-37 in various tRNAs. The sequence is that of tRNA (guanine-N(1)-)-methyltransferase from Desulforamulus reducens (strain ATCC BAA-1160 / DSM 100696 / MI-1) (Desulfotomaculum reducens).